Consider the following 72-residue polypeptide: ATP synthase subunit c (72 aa).

2 helical membrane-spanning segments follow: residues 4–24 (ALGA…GMGI) and 46–66 (LLFI…LIAF).

It belongs to the ATPase C chain family. As to quaternary structure, F-type ATPases have 2 components, F(1) - the catalytic core - and F(0) - the membrane proton channel. F(1) has five subunits: alpha(3), beta(3), gamma(1), delta(1), epsilon(1). F(0) has three main subunits: a(1), b(2) and c(10-14). The alpha and beta chains form an alternating ring which encloses part of the gamma chain. F(1) is attached to F(0) by a central stalk formed by the gamma and epsilon chains, while a peripheral stalk is formed by the delta and b chains.

It is found in the cell membrane. Its function is as follows. F(1)F(0) ATP synthase produces ATP from ADP in the presence of a proton or sodium gradient. F-type ATPases consist of two structural domains, F(1) containing the extramembraneous catalytic core and F(0) containing the membrane proton channel, linked together by a central stalk and a peripheral stalk. During catalysis, ATP synthesis in the catalytic domain of F(1) is coupled via a rotary mechanism of the central stalk subunits to proton translocation. Key component of the F(0) channel; it plays a direct role in translocation across the membrane. A homomeric c-ring of between 10-14 subunits forms the central stalk rotor element with the F(1) delta and epsilon subunits. The chain is ATP synthase subunit c from Syntrophomonas wolfei subsp. wolfei (strain DSM 2245B / Goettingen).